We begin with the raw amino-acid sequence, 498 residues long: Capsanthin/capsorubin synthase, chromoplastic (498 aa).

The transit peptide at 1-52 (METLLKPFPSPLLSIPTPNMYSFKHNSTFPNPTKQKDSRKFHYRNKSSTHFC) directs the protein to the chromoplast. Position 84 to 112 (84 to 112 (VIIIGTGPAGLRLAEQVSKYGIKVCCVDP)) interacts with NAD(+). The short motif at 293–297 (FLEET) is the FLEET motif element.

This sequence belongs to the lycopene cyclase family. Monomer. FAD is required as a cofactor. It depends on NADPH as a cofactor.

The protein resides in the plastid. Its subcellular location is the chromoplast. The enzyme catalyses all-trans-violaxanthin = all-trans-capsorubin. It catalyses the reaction all-trans-antheraxanthin = all-trans-capsanthin. It carries out the reaction all-trans-violaxanthin = (5R,6S)-5,6-epoxi-capsanthin. The catalysed reaction is (5R,6S)-5,6-epoxi-capsanthin = all-trans-capsorubin. It participates in carotenoid biosynthesis; capsanthin biosynthesis; capsanthin from antheraxanthin: step 1/1. Its pathway is carotenoid biosynthesis; capsorubin biosynthesis; capsorubin from violaxanthin: step 1/1. Catalyzes the conversion of the ubiquitous 5,6-epoxycarotenoids, antheraxanthin and violaxanthin, into capsanthin and capsorubin, respectively. This chain is Capsanthin/capsorubin synthase, chromoplastic, found in Capsicum annuum (Capsicum pepper).